Reading from the N-terminus, the 196-residue chain is Small ribosomal subunit protein uS4c (196 aa).

Residues 16-36 are disordered; it reads GALPGLTRKTPKSGSNLKKKF. The S4 RNA-binding domain occupies 89–169; it reads MRLDNILFRL…LPKHLTIDTL (81 aa).

The protein belongs to the universal ribosomal protein uS4 family. Part of the 30S ribosomal subunit. Contacts protein S5. The interaction surface between S4 and S5 is involved in control of translational fidelity.

It is found in the plastid. Its subcellular location is the chloroplast. Its function is as follows. One of the primary rRNA binding proteins, it binds directly to 16S rRNA where it nucleates assembly of the body of the 30S subunit. Functionally, with S5 and S12 plays an important role in translational accuracy. In Cinna latifolia (Drooping woodreed), this protein is Small ribosomal subunit protein uS4c (rps4).